The sequence spans 285 residues: Nucleotide-binding protein Cphy_0331 (285 aa).

Position 8–15 (8–15 (GMSGAGKS)) interacts with ATP. Position 59 to 62 (59 to 62 (DIRS)) interacts with GTP.

This sequence belongs to the RapZ-like family.

Functionally, displays ATPase and GTPase activities. This Lachnoclostridium phytofermentans (strain ATCC 700394 / DSM 18823 / ISDg) (Clostridium phytofermentans) protein is Nucleotide-binding protein Cphy_0331.